Here is a 780-residue protein sequence, read N- to C-terminus: Ribosome biogenesis protein BOP1 homolog (780 aa).

Residues 1–11 are compositionally biased toward basic residues; sequence MTKKQAIKRKV. The tract at residues 1-155 is disordered; it reads MTKKQAIKRK…DSDTSDEEDI (155 aa). The segment covering 17 to 26 has biased composition (polar residues); it reads TNEQSSASEP. Acidic residues-rich tracts occupy residues 44 to 53, 60 to 72, 83 to 113, and 145 to 154; these read EDTTDDEGID, SSED…DEEG, AEGD…DAEE, and EDSDTSDEED. WD repeat units lie at residues 441-482, 484-522, 566-608, 611-649, 652-691, 695-734, and 750-780; these read GHTD…RTIE, NDVV…KLLI, THFK…SQIP, KSKG…LIKK, TNSK…KPYQ, LHRN…DLLQ, and RDEF…RLYT.

It belongs to the WD repeat BOP1/ERB1 family.

It is found in the nucleus. It localises to the nucleolus. Its subcellular location is the nucleoplasm. Its function is as follows. Required for maturation of ribosomal RNAs and formation of the large ribosomal subunit. This Drosophila virilis (Fruit fly) protein is Ribosome biogenesis protein BOP1 homolog.